The following is a 66-amino-acid chain: Large ribosomal subunit protein uL29 (66 aa).

The protein belongs to the universal ribosomal protein uL29 family.

This Petrotoga mobilis (strain DSM 10674 / SJ95) protein is Large ribosomal subunit protein uL29.